We begin with the raw amino-acid sequence, 379 residues long: Queuine tRNA-ribosyltransferase (379 aa).

Asp94 (proton acceptor) is an active-site residue. Substrate is bound by residues 94–98 (DSGGF), Asp148, Gln191, and Gly218. The segment at 249–255 (GVGSPDS) is RNA binding. Asp268 (nucleophile) is an active-site residue. Residues 273 to 277 (TRIAR) are RNA binding; important for wobble base 34 recognition. Residues Cys306, Cys308, Cys311, and His337 each coordinate Zn(2+).

The protein belongs to the queuine tRNA-ribosyltransferase family. As to quaternary structure, homodimer. Within each dimer, one monomer is responsible for RNA recognition and catalysis, while the other monomer binds to the replacement base PreQ1. Zn(2+) is required as a cofactor.

The enzyme catalyses 7-aminomethyl-7-carbaguanine + guanosine(34) in tRNA = 7-aminomethyl-7-carbaguanosine(34) in tRNA + guanine. The protein operates within tRNA modification; tRNA-queuosine biosynthesis. Its function is as follows. Catalyzes the base-exchange of a guanine (G) residue with the queuine precursor 7-aminomethyl-7-deazaguanine (PreQ1) at position 34 (anticodon wobble position) in tRNAs with GU(N) anticodons (tRNA-Asp, -Asn, -His and -Tyr). Catalysis occurs through a double-displacement mechanism. The nucleophile active site attacks the C1' of nucleotide 34 to detach the guanine base from the RNA, forming a covalent enzyme-RNA intermediate. The proton acceptor active site deprotonates the incoming PreQ1, allowing a nucleophilic attack on the C1' of the ribose to form the product. After dissociation, two additional enzymatic reactions on the tRNA convert PreQ1 to queuine (Q), resulting in the hypermodified nucleoside queuosine (7-(((4,5-cis-dihydroxy-2-cyclopenten-1-yl)amino)methyl)-7-deazaguanosine). In Listeria monocytogenes serotype 4a (strain HCC23), this protein is Queuine tRNA-ribosyltransferase.